Consider the following 60-residue polypeptide: Arabinogalactan protein 12 (60 aa).

An N-terminal signal peptide occupies residues 1 to 27; that stretch reads MESMKMKLIVVLMVAIVAFSAVGNVAA. Gln28 carries the post-translational modification Pyrrolidone carboxylic acid. 4-hydroxyproline occurs at positions 32, 34, and 36. 3 O-linked (Ara...) hydroxyproline glycosylation sites follow: Pro32, Pro34, and Pro36. Ser38 carries GPI-anchor amidated serine lipidation. The propeptide at 39–60 is removed in mature form; sequence DAAMFVPALFASVAALASGFLF.

Belongs to the AG-peptide AGP family. Post-translationally, contains 4-hydroxyproline; hydroxylated on Pro-32, Pro-34 and Pro-36. O-glycosylated on hydroxyprolines; noncontiguous hydroxylproline residues are glycosylated with arabinogalactan. Expressed in reproductive tissues. Expressed in chalaza, funiculus, stigma, septum, style and transmitting tract.

The protein localises to the cell membrane. Proteoglycan that seems to be implicated in diverse developmental roles such as differentiation, cell-cell recognition, embryogenesis and programmed cell death. The protein is Arabinogalactan protein 12 of Arabidopsis thaliana (Mouse-ear cress).